A 130-amino-acid chain; its full sequence is Small ribosomal subunit protein uS11c (130 aa).

Belongs to the universal ribosomal protein uS11 family. As to quaternary structure, part of the 30S ribosomal subunit.

The protein localises to the plastid. It is found in the chloroplast. The sequence is that of Small ribosomal subunit protein uS11c from Trieres chinensis (Marine centric diatom).